A 280-amino-acid chain; its full sequence is F-actin-capping protein subunit alpha (280 aa).

The protein belongs to the F-actin-capping protein alpha subunit family. As to quaternary structure, heterodimer of an alpha and a beta subunit.

The protein localises to the cytoplasm. It is found in the cytoskeleton. In terms of biological role, F-actin-capping proteins bind in a Ca(2+)-independent manner to the fast growing ends of actin filaments (barbed end) thereby blocking the exchange of subunits at these ends. Unlike other capping proteins (such as gelsolin and severin), these proteins do not sever actin filaments. In Candida albicans (strain SC5314 / ATCC MYA-2876) (Yeast), this protein is F-actin-capping protein subunit alpha (CAP01).